A 399-amino-acid polypeptide reads, in one-letter code: Ras-related GTP-binding protein C (399 aa).

Residues 1–20 (MSLQYGAEETPLAGSYGAAD) are disordered. N-acetylserine is present on serine 2. A phosphoserine mark is found at serine 2 and serine 15. GDP contacts are provided by arginine 71, serine 72, glycine 73, lysine 74, serine 75, serine 76, threonine 90, glutamate 94, threonine 96, histidine 178, lysine 179, aspartate 181, serine 219, and isoleucine 220. GTP is bound at residue lysine 74. Residue threonine 90 coordinates GTP. Threonine 96 serves as a coordination point for GTP. Phosphothreonine is present on threonine 96. A GTP-binding site is contributed by aspartate 181.

This sequence belongs to the GTR/RAG GTP-binding protein family. Forms a heterodimer with RRAGA, in a sequence-independent manner, and RRAGB. Heterodimerization stabilizes proteins of the heterodimer. The GDP-bound form of RRAGC (in complex with the GTP-bound form of RRAGA or RRAGB), interacts with RPTOR, thereby promoting recruitment of mTORC1 to the lysosomes. Component of the lysosomal folliculin complex (LFC), composed of FLCN, FNIP1 (or FNIP2), RagA/RRAGA or RagB/RRAGB GDP-bound, RagC/RRAGC or RagD/RRAGD GTP-bound, and Ragulator. Interacts with NOL8. Interacts with SH3BP4; the interaction with this negative regulator is most probably direct, preferentially occurs with the inactive GDP-bound form of RRAGB, is negatively regulated by amino acids and prevents interaction with RPTOR. The Rag heterodimer interacts with SLC38A9; the probable amino acid sensor. Interacts with SESN1, SESN2 and SESN3. Interacts with PIP4P1. The Rag heterodimer interacts with the Ragulator complex. The GDP-bound form interacts with TFEB. The GDP-bound form interacts with TFE3.

Its subcellular location is the cytoplasm. The protein resides in the nucleus. It is found in the lysosome membrane. It catalyses the reaction GTP + H2O = GDP + phosphate + H(+). The activation of RagC/RRAGC is mediated by a GTPase activating protein (GAP). In high-amino acid conditions, activated by GTPase activating protein FLCN that stimulates RRAGC GTPase activity to turn it into its active GDP-bound form. In response to amino acid depletion, the GATOR1 complex inactivates RagC/RRAGC by securing the GTP-bound inactive form. Functionally, guanine nucleotide-binding protein that plays a crucial role in the cellular response to amino acid availability through regulation of the mTORC1 signaling cascade. Forms heterodimeric Rag complexes with RagA/RRAGA or RagB/RRAGB and cycles between an inactive GTP-bound and an active GDP-bound form: RagC/RRAGC is in its active form when GDP-bound RagC/RRAGC forms a complex with GTP-bound RagA/RRAGA (or RagB/RRAGB) and in an inactive form when GTP-bound RagC/RRAGC heterodimerizes with GDP-bound RagA/RRAGA (or RagB/RRAGB). In its GDP-bound active form, promotes the recruitment of mTORC1 to the lysosomes and its subsequent activation by the GTPase RHEB. This is a crucial step in the activation of the MTOR signaling cascade by amino acids. Also plays a central role in the non-canonical mTORC1 complex, which acts independently of RHEB and specifically mediates phosphorylation of MiT/TFE factors TFEB and TFE3: GDP-bound RagC/RRAGC mediates recruitment of MiT/TFE factors TFEB and TFE3. The chain is Ras-related GTP-binding protein C from Homo sapiens (Human).